Reading from the N-terminus, the 935-residue chain is Progesterone receptor (935 aa).

Residues 1–164 (MTELKAKGPR…PATQGVLSPL (164 aa)) form an AF3; mediates transcriptional activation region. The tract at residues 1–254 (MTELKAKGPR…GGAAAGGGAA (254 aa)) is disordered. Residues 1-568 (MTELKAKGPR…YSFESLPQKI (568 aa)) are modulating, Pro-Rich. At serine 20 the chain carries Phosphoserine. Positions 55-59 (LDGLL) match the LXXL motif 1 motif. Serine 81 carries the post-translational modification Phosphoserine. An LXXL motif 2 motif is present at residues 115–119 (LDTLL). Phosphoserine occurs at positions 130 and 162. The mediates transcriptional transrepression stretch occupies residues 165–305 (MSRSGGKAGD…LATTVMDFIH (141 aa)). Residues 183 to 187 (KVLPR) carry the Nuclear localization signal motif. A phosphoserine mark is found at serine 190 and serine 213. Over residues 220-231 (EVEEEDGSESED) the composition is skewed to acidic residues. The span at 232–246 (SAGPLLKGKPRALGG) shows a compositional bias: low complexity. At serine 294 the chain carries Phosphoserine; by MAPK1. Residues 331–378 (GGAGAASAFAPPRSSPSASSTPVAVGDFPDCAYPPDAEPKDDAYPLYS) form a disordered region. Residues 335–350 (AASAFAPPRSSPSASS) are compositionally biased toward low complexity. Serine 345 bears the Phosphoserine; by MAPK mark. A Glycyl lysine isopeptide (Lys-Gly) (interchain with G-Cter in SUMO); alternate cross-link involves residue lysine 388. Lysine 388 is covalently cross-linked (Glycyl lysine isopeptide (Lys-Gly) (interchain with G-Cter in ubiquitin); alternate). Serine 400 is subject to Phosphoserine; by CDK2. Residues 418–430 (PLGPPPPLPPRAP) show a composition bias toward pro residues. Positions 418–438 (PLGPPPPLPPRAPPTRAGEAA) are disordered. Residues 456 to 548 (STLECILYKA…VYPPYLNYLR (93 aa)) are AF1; mediates transcriptional activation. A Glycyl lysine isopeptide (Lys-Gly) (interchain with G-Cter in SUMO) cross-link involves residue lysine 533. NR C4-type zinc fingers lie at residues 569–589 (CLIC…CGSC) and 605–629 (CAGR…LRKC). Positions 569–641 (CLICGDEASG…AGMVLGGRKF (73 aa)) form a DNA-binding region, nuclear receptor. Serine 678 is subject to Phosphoserine. The NR LBD domain maps to 681-915 (QDIQLIPPLI…EFPEMMSEVI (235 aa)). Residues 689-935 (LINLLMSIEP…MVKPLLFHKK (247 aa)) form an AF2; mediates transcriptional activation region.

The protein belongs to the nuclear hormone receptor family. In terms of assembly, interacts with SMARD1 and UNC45A. Interacts with CUEDC2; the interaction promotes ubiquitination, decreases sumoylation, and represses transcriptional activity. Interacts with PIAS3; the interaction promotes sumoylation of PR in a hormone-dependent manner, inhibits DNA-binding, and alters nuclear export. Interacts with SP1; the interaction requires ligand-induced phosphorylation on Ser-345 by ERK1/2-MAPK. Interacts with PRMT2. Interacts with NCOA2 and NCOA1. Interacts with KLF9. Interacts with GTF2B. In terms of processing, phosphorylated on multiple serine sites. Several of these sites are hormone-dependent. Phosphorylation on Ser-294 is highly hormone-dependent and modulates ubiquitination and sumoylation on Lys-388. Phosphorylation on Ser-102 and Ser-345 also requires induction by hormone. Basal phosphorylation on Ser-81, Ser-162, Ser-190 and Ser-400 is increased in response to progesterone and can be phosphorylated in vitro by the CDK2-A1 complex. Increased levels of phosphorylation on Ser-400 also in the presence of EGF, heregulin, IGF, PMA and FBS. Phosphorylation at this site by CDK2 is ligand-independent, and increases nuclear translocation and transcriptional activity. Phosphorylation at Ser-162 and Ser-294, but not at Ser-190, is impaired during the G(2)/M phase of the cell cycle. Phosphorylation on Ser-345 by ERK1/2 MAPK is required for interaction with SP1. Post-translationally, sumoylation is hormone-dependent and represses transcriptional activity. Sumoylation on all three sites is enhanced by PIAS3. Desumoylated by SENP1. Sumoylation on Lys-388, the main site of sumoylation, is repressed by ubiquitination on the same site, and modulated by phosphorylation at Ser-294. Ubiquitination is hormone-dependent and represses sumoylation on the same site. Promoted by MAPK-mediated phosphorylation on Ser-294. In terms of processing, palmitoylated by ZDHHC7 and ZDHHC21. Palmitoylation is required for plasma membrane targeting and for rapid intracellular signaling via ERK and AKT kinases and cAMP generation.

The protein localises to the nucleus. Its subcellular location is the cytoplasm. Its function is as follows. The steroid hormones and their receptors are involved in the regulation of eukaryotic gene expression and affect cellular proliferation and differentiation in target tissues. Transcriptional activator of several progesteron-dependent promoters in a variety of cell types. Involved in activation of SRC-dependent MAPK signaling on hormone stimulation. This is Progesterone receptor (PGR) from Pongo pygmaeus (Bornean orangutan).